The chain runs to 452 residues: Glutamyl-tRNA(Gln) amidotransferase subunit A (452 aa).

Active-site charge relay system residues include lysine 56 and serine 131. Serine 155 serves as the catalytic Acyl-ester intermediate.

Belongs to the amidase family. GatA subfamily. As to quaternary structure, heterotrimer of A, B and C subunits.

The enzyme catalyses L-glutamyl-tRNA(Gln) + L-glutamine + ATP + H2O = L-glutaminyl-tRNA(Gln) + L-glutamate + ADP + phosphate + H(+). Its function is as follows. Allows the formation of correctly charged Gln-tRNA(Gln) through the transamidation of misacylated Glu-tRNA(Gln) in organisms which lack glutaminyl-tRNA synthetase. The reaction takes place in the presence of glutamine and ATP through an activated gamma-phospho-Glu-tRNA(Gln). In Campylobacter hominis (strain ATCC BAA-381 / DSM 21671 / CCUG 45161 / LMG 19568 / NCTC 13146 / CH001A), this protein is Glutamyl-tRNA(Gln) amidotransferase subunit A.